The sequence spans 942 residues: Valine--tRNA ligase (942 aa).

The 'HIGH' region signature appears at 43 to 53; sequence PNVTGTLHMGH. Residues 551–555 carry the 'KMSKS' region motif; sequence KMSKS. ATP is bound at residue Lys554. Residues 876-942 are a coiled coil; sequence EGLVDLDAER…AGLREQRAKL (67 aa).

It belongs to the class-I aminoacyl-tRNA synthetase family. ValS type 1 subfamily. Monomer.

Its subcellular location is the cytoplasm. It carries out the reaction tRNA(Val) + L-valine + ATP = L-valyl-tRNA(Val) + AMP + diphosphate. Catalyzes the attachment of valine to tRNA(Val). As ValRS can inadvertently accommodate and process structurally similar amino acids such as threonine, to avoid such errors, it has a 'posttransfer' editing activity that hydrolyzes mischarged Thr-tRNA(Val) in a tRNA-dependent manner. This chain is Valine--tRNA ligase, found in Stenotrophomonas maltophilia (strain R551-3).